The chain runs to 75 residues: Small ribosomal subunit protein bS18 (75 aa).

Belongs to the bacterial ribosomal protein bS18 family. In terms of assembly, part of the 30S ribosomal subunit. Forms a tight heterodimer with protein bS6.

Its function is as follows. Binds as a heterodimer with protein bS6 to the central domain of the 16S rRNA, where it helps stabilize the platform of the 30S subunit. The protein is Small ribosomal subunit protein bS18 of Cereibacter sphaeroides (strain ATCC 17029 / ATH 2.4.9) (Rhodobacter sphaeroides).